The chain runs to 241 residues: tRNA pseudouridine synthase A (241 aa).

Catalysis depends on Asp-52, which acts as the Nucleophile. Residue Tyr-111 participates in substrate binding.

The protein belongs to the tRNA pseudouridine synthase TruA family. Homodimer.

The catalysed reaction is uridine(38/39/40) in tRNA = pseudouridine(38/39/40) in tRNA. Functionally, formation of pseudouridine at positions 38, 39 and 40 in the anticodon stem and loop of transfer RNAs. The protein is tRNA pseudouridine synthase A of Ureaplasma parvum serovar 3 (strain ATCC 27815 / 27 / NCTC 11736).